The following is a 166-amino-acid chain: Cyanate hydratase (166 aa).

Residues arginine 92, glutamate 95, and serine 118 contribute to the active site.

Belongs to the cyanase family.

It carries out the reaction cyanate + hydrogencarbonate + 3 H(+) = NH4(+) + 2 CO2. Functionally, catalyzes the reaction of cyanate with bicarbonate to produce ammonia and carbon dioxide. This is Cyanate hydratase from Sorghum bicolor (Sorghum).